The chain runs to 918 residues: DNA mismatch repair protein MutS (918 aa).

Position 662-669 (662-669) interacts with ATP; that stretch reads GPNMAGKS.

This sequence belongs to the DNA mismatch repair MutS family.

This protein is involved in the repair of mismatches in DNA. It is possible that it carries out the mismatch recognition step. This protein has a weak ATPase activity. The protein is DNA mismatch repair protein MutS of Sorangium cellulosum (strain So ce56) (Polyangium cellulosum (strain So ce56)).